We begin with the raw amino-acid sequence, 506 residues long: Glutamate--tRNA ligase (506 aa).

The short motif at 24 to 34 (PSPTGLQHIGG) is the 'HIGH' region element. Residues Cys-121, Cys-123, Cys-148, and His-150 each contribute to the Zn(2+) site. The 'KMSKS' region signature appears at 266–270 (KLSKR). Residue Lys-269 coordinates ATP.

Belongs to the class-I aminoacyl-tRNA synthetase family. Glutamate--tRNA ligase type 1 subfamily. As to quaternary structure, monomer. It depends on Zn(2+) as a cofactor.

It localises to the cytoplasm. The catalysed reaction is tRNA(Glu) + L-glutamate + ATP = L-glutamyl-tRNA(Glu) + AMP + diphosphate. Catalyzes the attachment of glutamate to tRNA(Glu) in a two-step reaction: glutamate is first activated by ATP to form Glu-AMP and then transferred to the acceptor end of tRNA(Glu). In Borrelia recurrentis (strain A1), this protein is Glutamate--tRNA ligase.